The sequence spans 284 residues: Pantothenate synthetase (284 aa).

Residue 30–37 (MGYLHEGH) participates in ATP binding. Catalysis depends on histidine 37, which acts as the Proton donor. Glutamine 61 contacts (R)-pantoate. Residue glutamine 61 coordinates beta-alanine. ATP is bound at residue 147 to 150 (GQKD). A (R)-pantoate-binding site is contributed by glutamine 153. ATP-binding positions include valine 176 and 184-187 (KSSR).

This sequence belongs to the pantothenate synthetase family. In terms of assembly, homodimer.

It is found in the cytoplasm. It carries out the reaction (R)-pantoate + beta-alanine + ATP = (R)-pantothenate + AMP + diphosphate + H(+). It functions in the pathway cofactor biosynthesis; (R)-pantothenate biosynthesis; (R)-pantothenate from (R)-pantoate and beta-alanine: step 1/1. Functionally, catalyzes the condensation of pantoate with beta-alanine in an ATP-dependent reaction via a pantoyl-adenylate intermediate. The protein is Pantothenate synthetase of Lysinibacillus sphaericus (strain C3-41).